The chain runs to 289 residues: tRNA pseudouridine synthase A (289 aa).

The active-site Nucleophile is the D67. Y125 contributes to the substrate binding site.

It belongs to the tRNA pseudouridine synthase TruA family. Homodimer.

The catalysed reaction is uridine(38/39/40) in tRNA = pseudouridine(38/39/40) in tRNA. Its function is as follows. Formation of pseudouridine at positions 38, 39 and 40 in the anticodon stem and loop of transfer RNAs. This Prochlorococcus marinus (strain MIT 9211) protein is tRNA pseudouridine synthase A.